Consider the following 679-residue polypeptide: NADPH--cytochrome P450 reductase (679 aa).

Residues 1–21 are Lumenal-facing; it reads MADSHGDTGATMPEAAAQEAS. Residues 22–42 form a helical membrane-spanning segment; that stretch reads VFSMTDVVLFSLIVGLITYWF. At 43-679 the chain is on the cytoplasmic side; the sequence is LFRKKKEEVP…KGRYSLDVWS (637 aa). At Ser-64 the chain carries Phosphoserine. Residues 81 to 225 form the Flavodoxin-like domain; the sequence is IVVFYGSQTG…DFITWREQFW (145 aa). FMN is bound by residues 87–92, 139–142, 174–183, and Asp-209; these read SQTGTA, ATYG, and LGNKTYEHFN. The FAD-binding FR-type domain occupies 280-522; sequence KNPFLATVTT…FVRKSQFRLP (243 aa). NADP(+) is bound at residue Arg-299. Residues Arg-425, 455-458, 473-475, Tyr-479, and 489-492 each bind FAD; these read RYYS, CAV, and GVAT. Residues Thr-536, 597–598, 603–607, and Asp-640 contribute to the NADP(+) site; these read SR and KVYVQ. Residue Trp-678 coordinates FAD.

It belongs to the NADPH--cytochrome P450 reductase family. This sequence in the N-terminal section; belongs to the flavodoxin family. In the C-terminal section; belongs to the flavoprotein pyridine nucleotide cytochrome reductase family. Requires FAD as cofactor. The cofactor is FMN.

It is found in the endoplasmic reticulum membrane. It catalyses the reaction 2 oxidized [cytochrome P450] + NADPH = 2 reduced [cytochrome P450] + NADP(+) + H(+). Its function is as follows. This enzyme is required for electron transfer from NADP to cytochrome P450 in microsomes. It can also provide electron transfer to heme oxygenase and cytochrome B5. The polypeptide is NADPH--cytochrome P450 reductase (Oryctolagus cuniculus (Rabbit)).